A 70-amino-acid chain; its full sequence is Acyl carrier protein (70 aa).

One can recognise a Carrier domain in the interval 2–70; the sequence is SDIADRVKKI…ETIQTFGDAP (69 aa). Serine 37 carries the post-translational modification O-(pantetheine 4'-phosphoryl)serine.

This sequence belongs to the acyl carrier protein (ACP) family. In terms of processing, 4'-phosphopantetheine is transferred from CoA to a specific serine of apo-ACP by AcpS. This modification is essential for activity because fatty acids are bound in thioester linkage to the sulfhydryl of the prosthetic group.

The protein resides in the cytoplasm. Its pathway is lipid metabolism; fatty acid biosynthesis. In terms of biological role, carrier of the growing fatty acid chain in fatty acid biosynthesis. The chain is Acyl carrier protein from Cereibacter sphaeroides (Rhodobacter sphaeroides).